The primary structure comprises 232 residues: Dof zinc finger protein DOF4.3 (232 aa).

The segment at 25-79 (RVCARCDSDNTKFCYYNNYSEFQPRYFCKNCRRYWTHGGALRNVPIGGSSRAKRT) adopts a Dof-type zinc-finger fold. Positions 27, 30, 52, and 55 each coordinate Zn(2+).

It is found in the nucleus. Its function is as follows. Transcription factor that binds specifically to a 5'-AA[AG]G-3' consensus core sequence. The chain is Dof zinc finger protein DOF4.3 (DOF4.3) from Arabidopsis thaliana (Mouse-ear cress).